A 935-amino-acid chain; its full sequence is Progesterone receptor (935 aa).

The tract at residues 1–164 (MTELKAKGPR…PATQRVLSPL (164 aa)) is AF3; mediates transcriptional activation. The tract at residues 1–256 (MTELKAKGPR…AAAGGGAAAV (256 aa)) is disordered. The segment at 1–568 (MTELKAKGPR…YSFESLPQKI (568 aa)) is modulating, Pro-Rich. Phosphoserine is present on Ser20. Residues 55–59 (LDGLL) carry the LXXL motif 1 motif. The residue at position 81 (Ser81) is a Phosphoserine. Residues 115 to 119 (LDTLL) carry the LXXL motif 2 motif. Residues Ser130 and Ser162 each carry the phosphoserine modification. The segment at 165–305 (MSRSGGKAGD…LATTTMDFTH (141 aa)) is mediates transcriptional transrepression. The short motif at 183 to 187 (KVLPR) is the Nuclear localization signal element. A phosphoserine mark is found at Ser190 and Ser213. Acidic residues predominate over residues 220 to 231 (EVEEEDGSESED). Low complexity predominate over residues 232–246 (SAGPLLKGKPRALGG). Ser294 bears the Phosphoserine; by MAPK1 mark. A disordered region spans residues 328 to 353 (SYDGGAGAASAFAPPRSSPSASSTPV). Over residues 335 to 350 (AASAFAPPRSSPSASS) the composition is skewed to low complexity. A Phosphoserine; by MAPK modification is found at Ser345. Lys388 participates in a covalent cross-link: Glycyl lysine isopeptide (Lys-Gly) (interchain with G-Cter in SUMO); alternate. Residue Lys388 forms a Glycyl lysine isopeptide (Lys-Gly) (interchain with G-Cter in ubiquitin); alternate linkage. Residue Ser400 is modified to Phosphoserine; by CDK2. Residues 415 to 452 (PDFPLGPPPPLPPRAPPSRPGEAAVTAAPAGASVSSAS) form a disordered region. Over residues 418–433 (PLGPPPPLPPRAPPSR) the composition is skewed to pro residues. A compositionally biased stretch (low complexity) spans 434–452 (PGEAAVTAAPAGASVSSAS). The AF1; mediates transcriptional activation stretch occupies residues 456–548 (STLECILYKA…VYPPYLNYLR (93 aa)). Lys533 is covalently cross-linked (Glycyl lysine isopeptide (Lys-Gly) (interchain with G-Cter in SUMO)). NR C4-type zinc fingers lie at residues 569-589 (CLICGDEASGCHYGVLTCGSC) and 605-629 (CAGRNDCIVDKIRRKNCPACRLRKC). Residues 569–641 (CLICGDEASG…AGMVLGGRKF (73 aa)) constitute a DNA-binding region (nuclear receptor). Position 678 is a phosphoserine (Ser678). An NR LBD domain is found at 681 to 915 (QDIQLIPPLI…EFPEMMSEVI (235 aa)). The AF2; mediates transcriptional activation stretch occupies residues 689–935 (LINLLVSIEP…MVKPLLFHKK (247 aa)). Residue Arg768 coordinates progesterone.

The protein belongs to the nuclear hormone receptor family. In terms of assembly, interacts with SMARD1 and UNC45A. Interacts with CUEDC2; the interaction promotes ubiquitination, decreases sumoylation, and represses transcriptional activity. Interacts with PIAS3; the interaction promotes sumoylation of PR in a hormone-dependent manner, inhibits DNA-binding, and alters nuclear export. Interacts with SP1; the interaction requires ligand-induced phosphorylation on Ser-345 by ERK1/2-MAPK. Interacts with PRMT2. Interacts with NCOA2 and NCOA1. Interacts with KLF9. Interacts with GTF2B. Phosphorylated on multiple serine sites. Several of these sites are hormone-dependent. Phosphorylation on Ser-294 is highly hormone-dependent and modulates ubiquitination and sumoylation on Lys-388. Phosphorylation on Ser-345 also requires induction by hormone. Basal phosphorylation on Ser-81, Ser-162, Ser-190 and Ser-400 is increased in response to progesterone and can be phosphorylated in vitro by the CDK2-A1 complex. Increased levels of phosphorylation on Ser-400 also in the presence of EGF, heregulin, IGF, PMA and FBS. Phosphorylation at this site by CDK2 is ligand-independent, and increases nuclear translocation and transcriptional activity. Phosphorylation at Ser-162 and Ser-294, but not at Ser-190, is impaired during the G(2)/M phase of the cell cycle. Phosphorylation on Ser-345 by ERK1/2 MAPK is required for interaction with SP1. Post-translationally, sumoylation is hormone-dependent and represses transcriptional activity. Sumoylation on all three sites is enhanced by PIAS3. Desumoylated by SENP1. Sumoylation on Lys-388, the main site of sumoylation, is repressed by ubiquitination on the same site, and modulated by phosphorylation at Ser-294. In terms of processing, ubiquitination is hormone-dependent and represses sumoylation on the same site. Promoted by MAPK-mediated phosphorylation on Ser-294. Ubiquitinated by UBR5, leading to its degradation: UBR5 specifically recognizes and binds ligand-bound PGR when it is not associated with coactivators (NCOAs). In presence of NCOAs, the UBR5-degron is not accessible, preventing its ubiquitination and degradation. Palmitoylated by ZDHHC7 and ZDHHC21. Palmitoylation is required for plasma membrane targeting and for rapid intracellular signaling via ERK and AKT kinases and cAMP generation.

Its subcellular location is the nucleus. It localises to the cytoplasm. In terms of biological role, the steroid hormones and their receptors are involved in the regulation of eukaryotic gene expression and affect cellular proliferation and differentiation in target tissues. Transcriptional activator of several progesteron-dependent promoters in a variety of cell types. Involved in activation of SRC-dependent MAPK signaling on hormone stimulation. This chain is Progesterone receptor (PGR), found in Macaca sylvanus (Barbary macaque).